The primary structure comprises 1086 residues: Ribonuclease 3 (1086 aa).

2 disordered regions span residues 1–77 (MSDE…DSPR) and 158–233 (CHSM…LRNF). The segment covering 13-23 (PKHKRARRKKY) has biased composition (basic residues). Residues 24-35 (QKEYQERHKEEM) show a composition bias toward basic and acidic residues. Polar residues predominate over residues 43 to 53 (FQNQPSTSSAP). Residues 159-168 (HSMKGRKTPK) are compositionally biased toward basic residues. The segment covering 181 to 190 (VSDDSNDSQD) has biased composition (acidic residues). Positions 191–201 (EASTSEPTNRQ) are enriched in polar residues. A compositionally biased stretch (basic and acidic residues) spans 203–217 (PEADKTGEVKDEKQT). RNase III domains follow at residues 607–781 (LDVF…LDGG) and 833–957 (FHAL…VDRG). Positions 694, 767, 770, 873, 943, and 946 each coordinate Mg(2+). Positions 984-1059 (DAKSHLQQWC…AELALANLES (76 aa)) constitute a DRBM domain.

Belongs to the ribonuclease III family. Mg(2+) serves as cofactor. Requires Mn(2+) as cofactor.

It is found in the nucleus. It catalyses the reaction Endonucleolytic cleavage to 5'-phosphomonoester.. Executes the initial step of microRNA (miRNA) processing in the nucleus, that is the cleavage of pri-miRNA to release pre-miRNA. Involved in pre-rRNA processing. Cleaves double-strand RNA and does not cleave single-strand RNA. Involved in fertility. Required for the function or synthesis of the let-7 miRNA. The polypeptide is Ribonuclease 3 (drsh-1) (Caenorhabditis elegans).